The chain runs to 334 residues: Ornithine carbamoyltransferase (334 aa).

Carbamoyl phosphate is bound by residues 56-59, Q83, R107, and 134-137; these read STRT and HPTQ. L-ornithine-binding positions include N168, D232, and 236–237; that span reads SM. Residues 274 to 275 and R320 contribute to the carbamoyl phosphate site; that span reads CL.

The protein belongs to the aspartate/ornithine carbamoyltransferase superfamily. OTCase family.

The protein localises to the cytoplasm. It carries out the reaction carbamoyl phosphate + L-ornithine = L-citrulline + phosphate + H(+). The protein operates within amino-acid biosynthesis; L-arginine biosynthesis; L-arginine from L-ornithine and carbamoyl phosphate: step 1/3. Functionally, reversibly catalyzes the transfer of the carbamoyl group from carbamoyl phosphate (CP) to the N(epsilon) atom of ornithine (ORN) to produce L-citrulline. This Shigella dysenteriae serotype 1 (strain Sd197) protein is Ornithine carbamoyltransferase.